The chain runs to 432 residues: Trigger factor (432 aa).

Residues G161–P246 form the PPIase FKBP-type domain.

Belongs to the FKBP-type PPIase family. Tig subfamily.

Its subcellular location is the cytoplasm. It carries out the reaction [protein]-peptidylproline (omega=180) = [protein]-peptidylproline (omega=0). Functionally, involved in protein export. Acts as a chaperone by maintaining the newly synthesized protein in an open conformation. Functions as a peptidyl-prolyl cis-trans isomerase. The sequence is that of Trigger factor from Vibrio atlanticus (strain LGP32) (Vibrio splendidus (strain Mel32)).